A 253-amino-acid chain; its full sequence is Light-harvesting complex stress-related protein 1, chloroplastic (253 aa).

A chloroplast-targeting transit peptide spans 1–39 (MAMMMRKAAAVPASSRRSVAVNSVSGKRTVSGKAGAPVP). Tyr45 contacts chlorophyll b. The chlorophyll a site is built by Phe60, Glu81, and His84. A chlorophyll b-binding site is contributed by Arg86. A helical membrane pass occupies residues 87-107 (VAMLAALGFIVGEQLQDFPLF). A chlorophyll a-binding site is contributed by Gln124. Residues 131–151 (EPLLIAIGVAESYRVAVGWAT) traverse the membrane as a helical segment. Residues Glu141 and Arg144 each contribute to the chlorophyll b site. The chlorophyll a site is built by Lys190, Glu191, Asn194, Arg196, and Gln208. Residues 197 to 217 (LAMIAIAAFVAQELVEQTEIF) traverse the membrane as a helical segment.

It belongs to the light-harvesting chlorophyll a/b-binding (LHC) protein family.

Its subcellular location is the plastid. The protein resides in the chloroplast thylakoid membrane. Its function is as follows. Required for non-photochemical quenching (NPQ), a mechanism that converts and dissipates the harmful excess absorbed light energy into heat and protect the photosynthetic apparatus from photo-oxidative damage. Is able to sense luminal acidification of the thylakoid membranes, which occurs along with elevated electron flow caused by excess light, and to induce a large, fast, and reversible pH-dependent quenching in LHCII-containing membranes. Mediates excitation energy transfer from light-harvesting complex II (LHCII) to photosystem I (PSI), rather than photosystem II (PSII), at low pH, which mimics the acidified lumen of the thylakoid membranes in high light-exposed chloroplasts. Activates PSI-dependent fluorescence quenching in addition to dissipating excitation energy in LHCII to avoid photooxidative stress under excess light. This is Light-harvesting complex stress-related protein 1, chloroplastic from Chlamydomonas reinhardtii (Chlamydomonas smithii).